The chain runs to 226 residues: 7-cyano-7-deazaguanine synthase (226 aa).

9–19 (LSGGLDSATVL) contributes to the ATP binding site. The Zn(2+) site is built by Cys189, Cys199, Cys202, and Cys205.

Belongs to the QueC family. Requires Zn(2+) as cofactor.

It carries out the reaction 7-carboxy-7-deazaguanine + NH4(+) + ATP = 7-cyano-7-deazaguanine + ADP + phosphate + H2O + H(+). It functions in the pathway purine metabolism; 7-cyano-7-deazaguanine biosynthesis. Functionally, catalyzes the ATP-dependent conversion of 7-carboxy-7-deazaguanine (CDG) to 7-cyano-7-deazaguanine (preQ(0)). The polypeptide is 7-cyano-7-deazaguanine synthase (Cupriavidus pinatubonensis (strain JMP 134 / LMG 1197) (Cupriavidus necator (strain JMP 134))).